The chain runs to 193 residues: Epididymal-specific lipocalin-12 (193 aa).

Residues 1–19 (MGPWWALWLILTLPQILGG) form the signal peptide. Cysteines 88 and 193 form a disulfide. N-linked (GlcNAc...) asparagine glycans are attached at residues N143 and N172.

Belongs to the calycin superfamily. Lipocalin family. In terms of assembly, monomer.

The protein localises to the secreted. Functionally, binds all-trans retinoic acid and may act as a retinoid carrier protein within the epididymis. May play a role in male fertility. The chain is Epididymal-specific lipocalin-12 (Lcn12) from Rattus norvegicus (Rat).